The sequence spans 170 residues: Lipoprotein signal peptidase (170 aa).

Transmembrane regions (helical) follow at residues 5-25 (VYHQ…LDQG), 70-90 (WFFT…ICRV), and 98-118 (AFAL…RIIH). Catalysis depends on residues Asp123 and Asp141. A helical membrane pass occupies residues 137–157 (FNLADAAISLGAMVLIADLFI).

Belongs to the peptidase A8 family.

Its subcellular location is the cell inner membrane. The catalysed reaction is Release of signal peptides from bacterial membrane prolipoproteins. Hydrolyzes -Xaa-Yaa-Zaa-|-(S,diacylglyceryl)Cys-, in which Xaa is hydrophobic (preferably Leu), and Yaa (Ala or Ser) and Zaa (Gly or Ala) have small, neutral side chains.. It participates in protein modification; lipoprotein biosynthesis (signal peptide cleavage). In terms of biological role, this protein specifically catalyzes the removal of signal peptides from prolipoproteins. The sequence is that of Lipoprotein signal peptidase from Cellvibrio japonicus (strain Ueda107) (Pseudomonas fluorescens subsp. cellulosa).